The chain runs to 127 residues: Chondrosarcoma-associated gene 2/3 protein (127 aa).

The tract at residues 68–127 (MSRKPRASSPLSNNHPPTPKRRGSGRHPLNPGPEALSKFPRQPGREKGPIKEVPGTKGSP) is disordered.

As to expression, weakly expressed in kidney. Expressed in various tumor cell lines including carcinomas, myeloid and lymphoid malignancies, melanomas and prostate cancer. Overexpressed in taxol-resistant breast cancer line MDA 435TR and the doxorubicin-resistant multiple myelanoma lines RPMI-8226/Dox40 and RPMI-8226/MDR10V.

Drug-resistance related protein, its expression is associated with the chemotherapy resistant and neoplastic phenotype. May also be linked to the malignant phenotype. The protein is Chondrosarcoma-associated gene 2/3 protein (CSAG2) of Homo sapiens (Human).